Reading from the N-terminus, the 319-residue chain is Large ribosomal subunit protein uL29m (319 aa).

The disordered stretch occupies residues 1–55 (MWKRSFHSQGGPLRARTKFTKPKPKQPVLPKDKIRPPTQLTHHSNNLRITEPIPP). The span at 15-24 (ARTKFTKPKP) shows a compositional bias: basic residues. Positions 38-48 (TQLTHHSNNLR) are enriched in polar residues.

The protein belongs to the universal ribosomal protein uL29 family. In terms of assembly, component of the mitochondrial large ribosomal subunit. Mature mitochondrial ribosomes consist of a small (37S) and a large (54S) subunit. The 37S subunit contains at least 33 different proteins and 1 molecule of RNA (15S). The 54S subunit contains at least 45 different proteins and 1 molecule of RNA (21S).

Its subcellular location is the mitochondrion. The sequence is that of Large ribosomal subunit protein uL29m (MRPL4) from Saccharomyces cerevisiae (strain YJM789) (Baker's yeast).